The chain runs to 231 residues: Large ribosomal subunit protein uL1 (231 aa).

Belongs to the universal ribosomal protein uL1 family. In terms of assembly, part of the 50S ribosomal subunit.

Binds directly to 23S rRNA. The L1 stalk is quite mobile in the ribosome, and is involved in E site tRNA release. Functionally, protein L1 is also a translational repressor protein, it controls the translation of the L11 operon by binding to its mRNA. This chain is Large ribosomal subunit protein uL1, found in Teredinibacter turnerae (strain ATCC 39867 / T7901).